Here is a 568-residue protein sequence, read N- to C-terminus: Light-independent protochlorophyllide reductase subunit B (568 aa).

A [4Fe-4S] cluster-binding site is contributed by Asp-36. The active-site Proton donor is the Asp-293. 437–438 contributes to the substrate binding site; sequence GM. Residues 476–517 are disordered; it reads ANGHPEAGVSVGAAEPSAAPSRSVVTEESNRATTPSSSTVHP. The segment covering 498 to 515 has biased composition (polar residues); the sequence is SVVTEESNRATTPSSSTV.

This sequence belongs to the ChlB/BchB/BchZ family. Protochlorophyllide reductase is composed of three subunits; BchL, BchN and BchB. Forms a heterotetramer of two BchB and two BchN subunits. It depends on [4Fe-4S] cluster as a cofactor.

It catalyses the reaction chlorophyllide a + oxidized 2[4Fe-4S]-[ferredoxin] + 2 ADP + 2 phosphate = protochlorophyllide a + reduced 2[4Fe-4S]-[ferredoxin] + 2 ATP + 2 H2O. Its pathway is porphyrin-containing compound metabolism; bacteriochlorophyll biosynthesis (light-independent). Functionally, component of the dark-operative protochlorophyllide reductase (DPOR) that uses Mg-ATP and reduced ferredoxin to reduce ring D of protochlorophyllide (Pchlide) to form chlorophyllide a (Chlide). This reaction is light-independent. The NB-protein (BchN-BchB) is the catalytic component of the complex. This is Light-independent protochlorophyllide reductase subunit B from Roseiflexus sp. (strain RS-1).